The primary structure comprises 190 residues: UPF0316 protein Mboo_0605 (190 aa).

3 consecutive transmembrane segments (helical) span residues 3 to 23 (IGTF…RIAE), 41 to 61 (LAAY…GLVL), and 67 to 87 (FWNL…GMEI).

The protein belongs to the UPF0316 family.

It localises to the cell membrane. This is UPF0316 protein Mboo_0605 from Methanoregula boonei (strain DSM 21154 / JCM 14090 / 6A8).